We begin with the raw amino-acid sequence, 470 residues long: Proton-coupled amino acid transporter 3 (470 aa).

The Cytoplasmic portion of the chain corresponds to 1 to 46 (MSLLGRDYNSELNSLDNGPQSPSESSSSITSENVHPAGEAGLSMMQ). The segment covering 10-20 (SELNSLDNGPQ) has biased composition (polar residues). Positions 10-33 (SELNSLDNGPQSPSESSSSITSEN) are disordered. The segment covering 21–31 (SPSESSSSITS) has biased composition (low complexity). The helical transmembrane segment at 47–67 (TLIHLLKCNIGTGLLGLPLAI) threads the bilayer. Residues 68–71 (KNAG) are Extracellular-facing. The helical transmembrane segment at 72–92 (LLVGPVSLLAIGVLTVHCMVI) threads the bilayer. Residues 93–137 (LLNCAQHLSQRLQKTFVNYGEATMYGLETCPNTWLRAHAVWGRYT) are Cytoplasmic-facing. Residues 138–158 (VSFLLVITQLGFCSVYFMFMA) traverse the membrane as a helical segment. The Extracellular segment spans residues 159-185 (DNLQQMVEKAHVTSNICQPREILTLTP). Residues 186–206 (ILDIRFYMLIILPFLILLVFI) form a helical membrane-spanning segment. At 207 to 210 (QNLK) the chain is on the cytoplasmic side. A helical transmembrane segment spans residues 211 to 231 (VLSVFSTLANITTLGSMALIF). The Extracellular segment spans residues 232 to 252 (EYIMEGIPYPSNLPLMANWKT). A helical transmembrane segment spans residues 253-273 (FLLFFGTAIFTFEGVGMVLPL). The Cytoplasmic segment spans residues 274–284 (KNQMKHPQQFS). The chain crosses the membrane as a helical span at residues 285–305 (FVLYLGMSIVIILYILLGTLG). The Extracellular portion of the chain corresponds to 306–337 (YMKFGSDTQASITLNLPNCWLYQSVKLMYSIG). Residues 338–358 (IFFTYALQFHVPAEIIIPFAI) form a helical membrane-spanning segment. At 359–367 (SQVSESWAL) the chain is on the cytoplasmic side. The chain crosses the membrane as a helical span at residues 368–388 (FVDLSVRSALVCLTCVSAILI). Residues 389–392 (PRLD) lie on the Extracellular side of the membrane. Residues 393–413 (LVISLVGSVSSSALALIIPAL) traverse the membrane as a helical segment. The Cytoplasmic portion of the chain corresponds to 414-425 (LEIVIFYSEDMS). The chain crosses the membrane as a helical span at residues 426–446 (CVTIAKDIMISIVGLLGCIFG). The Extracellular segment spans residues 447–470 (TYQALYELPQPISHSMANSTGVHA).

The protein belongs to the amino acid/polyamine transporter 2 family. In terms of tissue distribution, specifically expressed in testis.

It localises to the membrane. The sequence is that of Proton-coupled amino acid transporter 3 (SLC36A3) from Homo sapiens (Human).